The primary structure comprises 79 residues: RNA-binding protein Hfq (79 aa).

The 61-residue stretch at D10–V70 folds into the Sm domain.

The protein belongs to the Hfq family. As to quaternary structure, homohexamer.

Functionally, RNA chaperone that binds small regulatory RNA (sRNAs) and mRNAs to facilitate mRNA translational regulation in response to envelope stress, environmental stress and changes in metabolite concentrations. Also binds with high specificity to tRNAs. The protein is RNA-binding protein Hfq of Bartonella quintana (strain Toulouse) (Rochalimaea quintana).